Reading from the N-terminus, the 372-residue chain is Rab9 effector protein with kelch motifs (372 aa).

Kelch repeat units lie at residues 49–95 (KVFI…FIPS), 100–146 (RIWV…TSSA), 151–200 (QLYV…VMVA), 204–250 (KLFI…SAVA), and 254–303 (HVYI…IIPW). Serine 133 carries the phosphoserine modification. Positions 314-340 (SNSLTLNHEAEKEDSADKVMSHSGDSH) are disordered. Basic and acidic residues predominate over residues 321–340 (HEAEKEDSADKVMSHSGDSH).

Interacts with PIKFYVE; the interaction recruits RABEPK to the endosomal membrane. Interacts with RAB9 in its GTP-bound conformation. Post-translationally, phosphorylated on Ser residues by PIKFYVE.

The protein localises to the cytoplasm. It localises to the endosome membrane. Its function is as follows. Rab9 effector required for endosome to trans-Golgi network (TGN) transport. The chain is Rab9 effector protein with kelch motifs from Homo sapiens (Human).